The primary structure comprises 452 residues: tRNA modification GTPase MnmE (452 aa).

(6S)-5-formyl-5,6,7,8-tetrahydrofolate is bound by residues arginine 21, glutamate 82, and arginine 121. The region spanning 217 to 373 (GINTTIIGKP…LENKIIEMFN (157 aa)) is the TrmE-type G domain. Position 227 (asparagine 227) interacts with K(+). Residues 227–232 (NVGKSS), 246–252 (TDIPGTT), and 271–274 (DTAG) contribute to the GTP site. Serine 231 is a binding site for Mg(2+). Residues threonine 246, isoleucine 248, and threonine 251 each coordinate K(+). Threonine 252 contributes to the Mg(2+) binding site. Lysine 452 provides a ligand contact to (6S)-5-formyl-5,6,7,8-tetrahydrofolate.

The protein belongs to the TRAFAC class TrmE-Era-EngA-EngB-Septin-like GTPase superfamily. TrmE GTPase family. In terms of assembly, homodimer. Heterotetramer of two MnmE and two MnmG subunits. It depends on K(+) as a cofactor.

It is found in the cytoplasm. In terms of biological role, exhibits a very high intrinsic GTPase hydrolysis rate. Involved in the addition of a carboxymethylaminomethyl (cmnm) group at the wobble position (U34) of certain tRNAs, forming tRNA-cmnm(5)s(2)U34. This Finegoldia magna (strain ATCC 29328 / DSM 20472 / WAL 2508) (Peptostreptococcus magnus) protein is tRNA modification GTPase MnmE.